The primary structure comprises 107 residues: Nucleoid-associated protein CE0210 (107 aa).

This sequence belongs to the YbaB/EbfC family. Homodimer.

The protein resides in the cytoplasm. It localises to the nucleoid. In terms of biological role, binds to DNA and alters its conformation. May be involved in regulation of gene expression, nucleoid organization and DNA protection. This chain is Nucleoid-associated protein CE0210, found in Corynebacterium efficiens (strain DSM 44549 / YS-314 / AJ 12310 / JCM 11189 / NBRC 100395).